The sequence spans 503 residues: Arginyl-tRNA--protein transferase 1 (503 aa).

It belongs to the R-transferase family.

The protein localises to the cytoplasm. The catalysed reaction is an N-terminal L-alpha-aminoacyl-[protein] + L-arginyl-tRNA(Arg) = an N-terminal L-arginyl-L-aminoacyl-[protein] + tRNA(Arg) + H(+). In terms of biological role, involved in the post-translational conjugation of arginine to the N-terminal aspartate or glutamate of a protein. This arginylation is required for degradation of the protein via the ubiquitin pathway. Does not arginylate cysteine residues. This chain is Arginyl-tRNA--protein transferase 1 (ATE1), found in Saccharomyces cerevisiae (strain ATCC 204508 / S288c) (Baker's yeast).